The primary structure comprises 243 residues: Terpene cyclase atmB (243 aa).

Transmembrane regions (helical) follow at residues 19–39, 48–68, 78–98, 112–132, 134–154, 169–189, and 205–225; these read IADVFVIGMGIGWIINYVGMV, YGMAIMPLCCNIAWEIVYGLI, GVFLSGLTINLGVIYTAIKFG, LPLIFMLGILGFLTGHLALAA, IGPALAYNWGAAFCQLLLSVG, SYTLWLSRFLGSFSVVISAWL, and LILWCLFAWLVVDGSYGVCFY.

The protein belongs to the paxB family.

Its subcellular location is the membrane. In terms of biological role, terpene cyclase; part of the ATM2 gene cluster that mediates the biosynthesis of aflatrem, a tremorgenic mycotoxin with acute neurotoxic effects. Synthesis of geranylgeranyl diphosphate (GGPP) by AtmG (a GGPP synthase) precedes condensation of GGPP with indole 3-glycerol phosphate, followed by epoxidation and cyclization by AtmM (a FAD-dependent monooxygenase) and AtmC (a prenyltransferase) to produce paspaline. AtmB is also essential for paspaline production, but its exact role has not been identified yet. AtmP, a cytochrome P450 monooxygenase, subsequently converts paspaline to 13-desoxypaxilline via PC-M6 by removal of the C-30 methyl group and oxidation at C-10. AtmQ, a cytochrome P450 monooxygenase, then catalyzes the oxidation of 13-desoxypaxilline, first at C-7 to produce paspalicine and then at C-13 to form paspalinine. Finally, AtmD prenylates paspalinine to form aflatrem. This chain is Terpene cyclase atmB, found in Aspergillus flavus.